A 107-amino-acid polypeptide reads, in one-letter code: DNA-directed RNA polymerase subunit omega (107 aa).

It belongs to the RNA polymerase subunit omega family. As to quaternary structure, the RNAP catalytic core consists of 2 alpha, 1 beta, 1 beta' and 1 omega subunit. When a sigma factor is associated with the core the holoenzyme is formed, which can initiate transcription.

The catalysed reaction is RNA(n) + a ribonucleoside 5'-triphosphate = RNA(n+1) + diphosphate. Functionally, promotes RNA polymerase assembly. Latches the N- and C-terminal regions of the beta' subunit thereby facilitating its interaction with the beta and alpha subunits. This is DNA-directed RNA polymerase subunit omega from Mycolicibacterium smegmatis (strain ATCC 700084 / mc(2)155) (Mycobacterium smegmatis).